Consider the following 770-residue polypeptide: ATP-dependent RNA helicase HCA4 (770 aa).

The short motif at 41 to 69 (KFFKDLPISDPTLKGLRESSFIKLTEIQA) is the Q motif element. The Helicase ATP-binding domain occupies 72 to 246 (IPVSLQGHDV…RLSLTDYKTV (175 aa)). 85–92 (AKTGSGKT) serves as a coordination point for ATP. The DEAD box signature appears at 194-197 (DEAD). The 160-residue stretch at 278 to 437 (KLDILFSFIK…SIKPQLQSLL (160 aa)) folds into the Helicase C-terminal domain. Ser-692, Ser-710, Ser-714, and Ser-743 each carry phosphoserine. The tract at residues 705-724 (GTGNLSDDMSDGDMPDSEGH) is disordered.

Belongs to the DEAD box helicase family. DDX10/DBP4 subfamily. Interacts with the U3 and U14 snoRNAs. Associates with pre-ribosomal complexes.

The protein localises to the nucleus. It is found in the nucleolus. It catalyses the reaction ATP + H2O = ADP + phosphate + H(+). In terms of biological role, ATP-dependent RNA helicase required for ribosome biogenesis. Involved in the release of U14 snoRNA in pre-ribosomal complexes. Required for pre-rRNA cleavage at site A2. The chain is ATP-dependent RNA helicase HCA4 (HCA4) from Saccharomyces cerevisiae (strain ATCC 204508 / S288c) (Baker's yeast).